Here is a 219-residue protein sequence, read N- to C-terminus: Thiamine-phosphate synthase (219 aa).

4-amino-2-methyl-5-(diphosphooxymethyl)pyrimidine contacts are provided by residues 44–48 and Asn-79; that span reads QFREK. Positions 80 and 99 each coordinate Mg(2+). Ser-117 contacts 4-amino-2-methyl-5-(diphosphooxymethyl)pyrimidine. Position 143–145 (143–145) interacts with 2-[(2R,5Z)-2-carboxy-4-methylthiazol-5(2H)-ylidene]ethyl phosphate; sequence TST. 4-amino-2-methyl-5-(diphosphooxymethyl)pyrimidine is bound at residue Lys-146. 2-[(2R,5Z)-2-carboxy-4-methylthiazol-5(2H)-ylidene]ethyl phosphate contacts are provided by residues Gly-175 and 195–196; that span reads IS.

The protein belongs to the thiamine-phosphate synthase family. Mg(2+) is required as a cofactor.

It catalyses the reaction 2-[(2R,5Z)-2-carboxy-4-methylthiazol-5(2H)-ylidene]ethyl phosphate + 4-amino-2-methyl-5-(diphosphooxymethyl)pyrimidine + 2 H(+) = thiamine phosphate + CO2 + diphosphate. The enzyme catalyses 2-(2-carboxy-4-methylthiazol-5-yl)ethyl phosphate + 4-amino-2-methyl-5-(diphosphooxymethyl)pyrimidine + 2 H(+) = thiamine phosphate + CO2 + diphosphate. The catalysed reaction is 4-methyl-5-(2-phosphooxyethyl)-thiazole + 4-amino-2-methyl-5-(diphosphooxymethyl)pyrimidine + H(+) = thiamine phosphate + diphosphate. It participates in cofactor biosynthesis; thiamine diphosphate biosynthesis; thiamine phosphate from 4-amino-2-methyl-5-diphosphomethylpyrimidine and 4-methyl-5-(2-phosphoethyl)-thiazole: step 1/1. Its function is as follows. Condenses 4-methyl-5-(beta-hydroxyethyl)thiazole monophosphate (THZ-P) and 2-methyl-4-amino-5-hydroxymethyl pyrimidine pyrophosphate (HMP-PP) to form thiamine monophosphate (TMP). The sequence is that of Thiamine-phosphate synthase from Bacillus cereus (strain ZK / E33L).